Consider the following 444-residue polypeptide: Protein phosphatase 2C homolog C10F6.17c (444 aa).

A PPM-type phosphatase domain is found at Arg85–Phe439. Mn(2+) is bound by residues Asp121, Gly122, and Asp344.

The protein belongs to the PP2C family. Mg(2+) serves as cofactor. The cofactor is Mn(2+).

It localises to the mitochondrion. It catalyses the reaction O-phospho-L-seryl-[protein] + H2O = L-seryl-[protein] + phosphate. It carries out the reaction O-phospho-L-threonyl-[protein] + H2O = L-threonyl-[protein] + phosphate. In terms of biological role, involved in regulation of pyruvate dehydrogenase activity. This Schizosaccharomyces pombe (strain 972 / ATCC 24843) (Fission yeast) protein is Protein phosphatase 2C homolog C10F6.17c.